A 209-amino-acid chain; its full sequence is Small ribosomal subunit protein uS4 (209 aa).

Residues 98 to 164 (RRLDNVVYRL…LPIKNAIELN (67 aa)) enclose the S4 RNA-binding domain.

Belongs to the universal ribosomal protein uS4 family. In terms of assembly, part of the 30S ribosomal subunit. Contacts protein S5. The interaction surface between S4 and S5 is involved in control of translational fidelity.

In terms of biological role, one of the primary rRNA binding proteins, it binds directly to 16S rRNA where it nucleates assembly of the body of the 30S subunit. Its function is as follows. With S5 and S12 plays an important role in translational accuracy. The protein is Small ribosomal subunit protein uS4 of Thermosipho melanesiensis (strain DSM 12029 / CIP 104789 / BI429).